The primary structure comprises 166 residues: Disulfide bond formation protein B (166 aa).

The Cytoplasmic segment spans residues 1-11; it reads MQSFAFSTRAL. A helical transmembrane segment spans residues 12 to 28; it reads FLGLFAVCAGLLGFGLY. The Periplasmic portion of the chain corresponds to 29–46; it reads LQHAVGLEPCPMCIMQRY. A disulfide bridge connects residues Cys-38 and Cys-41. A helical transmembrane segment spans residues 47–63; that stretch reads AFVAIALTALVAGLHGP. At 64–70 the chain is on the cytoplasmic side; that stretch reads GRRGTRA. The helical transmembrane segment at 71–87 threads the bilayer; it reads YAAVILLLALAGGGVAL. Residues 88–143 are Periplasmic-facing; sequence RQTWMQLYPPEFAECGPDLEFMLGSFPLADALPMIFQGAGDCSKVDWAFLGLSIAN. A disulfide bridge links Cys-102 with Cys-129. Residues 144 to 162 form a helical membrane-spanning segment; it reads WSLVCLTLVAVFAIMMIAR. Residues 163 to 166 are Cytoplasmic-facing; the sequence is KRGG.

This sequence belongs to the DsbB family.

The protein resides in the cell inner membrane. In terms of biological role, required for disulfide bond formation in some periplasmic proteins. Acts by oxidizing the DsbA protein. The protein is Disulfide bond formation protein B of Aromatoleum aromaticum (strain DSM 19018 / LMG 30748 / EbN1) (Azoarcus sp. (strain EbN1)).